The sequence spans 441 residues: uncharacterized protein (441 aa).

57-64 (GVRRGGKT) contacts ATP.

This is an uncharacterized protein from Methanocaldococcus jannaschii (strain ATCC 43067 / DSM 2661 / JAL-1 / JCM 10045 / NBRC 100440) (Methanococcus jannaschii).